Consider the following 400-residue polypeptide: Probable peptidoglycan D,D-transpeptidase PenA (400 aa).

Residues 1-21 are disordered; that stretch reads NIDGKGQEGLELSREDSLRGE. S128 functions as the Acyl-ester intermediate in the catalytic mechanism.

The protein belongs to the transpeptidase family. FtsI subfamily.

It localises to the cell inner membrane. The catalysed reaction is Preferential cleavage: (Ac)2-L-Lys-D-Ala-|-D-Ala. Also transpeptidation of peptidyl-alanyl moieties that are N-acyl substituents of D-alanine.. It participates in cell wall biogenesis; peptidoglycan biosynthesis. Catalyzes cross-linking of the peptidoglycan cell wall at the division septum. The protein is Probable peptidoglycan D,D-transpeptidase PenA of Neisseria flavescens.